Reading from the N-terminus, the 258-residue chain is UPF0246 protein YaaA (258 aa).

This sequence belongs to the UPF0246 family.

The protein is UPF0246 protein YaaA of Escherichia coli O7:K1 (strain IAI39 / ExPEC).